The chain runs to 508 residues: General transcription factor IIF subunit 1 (508 aa).

The residue at position 2 (Ala2) is an N-acetylalanine. Thr156 bears the Phosphothreonine mark. The segment at 177-448 (MQQRRLKDQD…SSGDVQVTED (272 aa)) is disordered. Ser217, Ser218, Ser221, and Ser224 each carry phosphoserine. The segment covering 232-251 (SKAKKKAPVTKAGRKKKKKK) has biased composition (basic residues). 2 stretches are compositionally biased toward acidic residues: residues 255–270 (DEAFEDSDDGDFEGQE) and 303–325 (EQSESSEESEEEKPPEEDKEEEE). Thr331 is subject to Phosphothreonine. Positions 343-355 (DDSDSSEESDIDS) are enriched in acidic residues. Residues 364–374 (AKKKTPPKRER) show a composition bias toward basic residues. 4 positions are modified to phosphoserine: Ser377, Ser380, Ser381, and Ser385. The segment covering 378–388 (GGSSKGTSRPG) has biased composition (polar residues). Thr389 carries the phosphothreonine modification. The span at 389-406 (TPSAEAASTSSTLRAAAS) shows a compositional bias: low complexity. Ser391 is subject to Phosphoserine. Lys407 bears the N6-acetyllysine mark. The span at 428–443 (GPQSLSGKSTPSSGDV) shows a compositional bias: polar residues. Residues Ser431, Ser433, and Ser436 each carry the phosphoserine modification. Thr437 carries the phosphothreonine modification. Ser440 is subject to Phosphoserine.

This sequence belongs to the TFIIF alpha subunit family. In terms of assembly, heterodimer of an alpha and a beta subunit. Interacts with GTF2F2, CTDP1, TAF6/TAFII80 and URI1. Interacts with GTF2B (via C-terminus and preferentially via acetylated form); this interaction prevents binding of GTF2B to GTF2F2. Part of TBP-based Pol II pre-initiation complex (PIC), in which Pol II core assembles with general transcription factors and other specific initiation factors including GTF2E1, GTF2E2, GTF2F1, GTF2F2, TCEA1, ERCC2, ERCC3, GTF2H2, GTF2H3, GTF2H4, GTF2H5, GTF2A1, GTF2A2, GTF2B and TBP; this large multi-subunit PIC complex mediates DNA unwinding and targets Pol II core to the transcription start site where the first phosphodiester bond forms. Phosphorylated on Ser and other residues by TAF1 and casein kinase II-like kinases.

It is found in the nucleus. Functionally, TFIIF is a general transcription initiation factor that binds to RNA polymerase II and helps to recruit it to the initiation complex in collaboration with TFIIB. It promotes transcription elongation. This chain is General transcription factor IIF subunit 1 (Gtf2f1), found in Rattus norvegicus (Rat).